A 176-amino-acid polypeptide reads, in one-letter code: Salivary antigen 1 (176 aa).

Positions 1–18 are cleaved as a signal peptide; it reads MNYCFLVFLVYLVFAVNG.

The protein localises to the secreted. This is Salivary antigen 1 from Ctenocephalides felis (Cat flea).